We begin with the raw amino-acid sequence, 103 residues long: Large ribosomal subunit protein bL32m (103 aa).

A mitochondrion-targeting transit peptide spans 1–47 (MALLRGNSLAISQKMLSVFQASALPHISLRIFISPPSIANIWNSILL). Zn(2+) contacts are provided by C77, C80, C90, and C93.

It belongs to the bacterial ribosomal protein bL32 family. Component of the mitochondrial large ribosomal subunit (mt-LSU). Mature yeast 74S mitochondrial ribosomes consist of a small (37S) and a large (54S) subunit. The 37S small subunit contains a 15S ribosomal RNA (15S mt-rRNA) and at least 32 different proteins. The 54S large subunit contains a 21S rRNA (21S mt-rRNA) and at least 45 different proteins. bL32m has a zinc binding site. In terms of processing, MRPL32 precursor is processed by the m-AAA protease, which cleaves the N-terminal transit peptide. Cleavage by the m-AAA protease takes place prior to assembly into the large subunit, an essential step for mitochondrial ribosome (mitoribosome) assembly. Proper processing by the m-AAA protease is dependent on the zinc-binding region within the tightly folded C-terminal domain of MRPL32: zinc-dependent folding halts degradation initiated from the N-terminus and triggers the release of mature mrpl32.

Its subcellular location is the mitochondrion. Its function is as follows. Component of the mitochondrial ribosome (mitoribosome), a dedicated translation machinery responsible for the synthesis of mitochondrial genome-encoded proteins, including at least some of the essential transmembrane subunits of the mitochondrial respiratory chain. The mitoribosomes are attached to the mitochondrial inner membrane and translation products are cotranslationally integrated into the membrane. This Schizosaccharomyces pombe (strain 972 / ATCC 24843) (Fission yeast) protein is Large ribosomal subunit protein bL32m (mrpl32).